The sequence spans 473 residues: Argininosuccinate lyase (473 aa).

The protein belongs to the lyase 1 family. Argininosuccinate lyase subfamily.

It localises to the cytoplasm. The enzyme catalyses 2-(N(omega)-L-arginino)succinate = fumarate + L-arginine. It participates in amino-acid biosynthesis; L-arginine biosynthesis; L-arginine from L-ornithine and carbamoyl phosphate: step 3/3. This Mycobacteroides abscessus (strain ATCC 19977 / DSM 44196 / CCUG 20993 / CIP 104536 / JCM 13569 / NCTC 13031 / TMC 1543 / L948) (Mycobacterium abscessus) protein is Argininosuccinate lyase.